The following is an 889-amino-acid chain: Translation initiation factor IF-2 (889 aa).

Positions 1–299 (MTDNKDDKTL…EKFKRSQMQE (299 aa)) are disordered. Residues 61-76 (ITPVAATPAARPAEQR) are compositionally biased toward low complexity. Over residues 77 to 93 (PMPPQPSGRPAPQPQPH) the composition is skewed to pro residues. Positions 116–182 (MEARRRALAE…EAEKTEEKVE (67 aa)) are enriched in basic and acidic residues. Positions 196 to 215 (RPQPGRAAPAATPAAPDGAA) are enriched in low complexity. Residues 220-231 (RGTESEEDERRR) are compositionally biased toward basic and acidic residues. The tr-type G domain occupies 387 to 554 (SRPPIVTIMG…AILLQSEILD (168 aa)). The G1 stretch occupies residues 396–403 (GHVDHGKT). 396 to 403 (GHVDHGKT) is a GTP binding site. The G2 stretch occupies residues 421 to 425 (GITQH). A G3 region spans residues 442–445 (DTPG). Residues 442–446 (DTPGH) and 496–499 (NKID) each bind GTP. The G4 stretch occupies residues 496–499 (NKID). The G5 stretch occupies residues 532–534 (SAK).

The protein belongs to the TRAFAC class translation factor GTPase superfamily. Classic translation factor GTPase family. IF-2 subfamily.

Its subcellular location is the cytoplasm. One of the essential components for the initiation of protein synthesis. Protects formylmethionyl-tRNA from spontaneous hydrolysis and promotes its binding to the 30S ribosomal subunits. Also involved in the hydrolysis of GTP during the formation of the 70S ribosomal complex. The protein is Translation initiation factor IF-2 of Rhizobium meliloti (strain 1021) (Ensifer meliloti).